A 243-amino-acid polypeptide reads, in one-letter code: 1-(5-phosphoribosyl)-5-[(5-phosphoribosylamino)methylideneamino] imidazole-4-carboxamide isomerase (243 aa).

The active-site Proton acceptor is the Asp-8. The active-site Proton donor is the Asp-129.

It belongs to the HisA/HisF family.

The protein localises to the cytoplasm. It catalyses the reaction 1-(5-phospho-beta-D-ribosyl)-5-[(5-phospho-beta-D-ribosylamino)methylideneamino]imidazole-4-carboxamide = 5-[(5-phospho-1-deoxy-D-ribulos-1-ylimino)methylamino]-1-(5-phospho-beta-D-ribosyl)imidazole-4-carboxamide. It functions in the pathway amino-acid biosynthesis; L-histidine biosynthesis; L-histidine from 5-phospho-alpha-D-ribose 1-diphosphate: step 4/9. In Brucella anthropi (strain ATCC 49188 / DSM 6882 / CCUG 24695 / JCM 21032 / LMG 3331 / NBRC 15819 / NCTC 12168 / Alc 37) (Ochrobactrum anthropi), this protein is 1-(5-phosphoribosyl)-5-[(5-phosphoribosylamino)methylideneamino] imidazole-4-carboxamide isomerase.